Reading from the N-terminus, the 331-residue chain is 6-phosphogluconolactonase (331 aa).

Lysine 287 bears the N6-acetyllysine mark.

The protein belongs to the cycloisomerase 2 family.

The enzyme catalyses 6-phospho-D-glucono-1,5-lactone + H2O = 6-phospho-D-gluconate + H(+). It functions in the pathway carbohydrate degradation; pentose phosphate pathway; D-ribulose 5-phosphate from D-glucose 6-phosphate (oxidative stage): step 2/3. In terms of biological role, catalyzes the hydrolysis of 6-phosphogluconolactone to 6-phosphogluconate. This Escherichia coli O6:K15:H31 (strain 536 / UPEC) protein is 6-phosphogluconolactonase.